A 156-amino-acid polypeptide reads, in one-letter code: Small ribosomal subunit protein uS7 (156 aa).

It belongs to the universal ribosomal protein uS7 family. As to quaternary structure, part of the 30S ribosomal subunit. Contacts proteins S9 and S11.

One of the primary rRNA binding proteins, it binds directly to 16S rRNA where it nucleates assembly of the head domain of the 30S subunit. Is located at the subunit interface close to the decoding center, probably blocks exit of the E-site tRNA. The chain is Small ribosomal subunit protein uS7 from Shouchella clausii (strain KSM-K16) (Alkalihalobacillus clausii).